A 112-amino-acid polypeptide reads, in one-letter code: UPF0342 protein SPH_1504 (112 aa).

The protein belongs to the UPF0342 family.

This is UPF0342 protein SPH_1504 from Streptococcus pneumoniae (strain Hungary19A-6).